The sequence spans 642 residues: 1-deoxy-D-xylulose-5-phosphate synthase (642 aa).

Thiamine diphosphate contacts are provided by residues H79 and 120–122 (AHS). Mg(2+) is bound at residue D155. Thiamine diphosphate is bound by residues 156–157 (GS), N184, Y293, and E375. N184 contacts Mg(2+).

Belongs to the transketolase family. DXPS subfamily. As to quaternary structure, homodimer. Mg(2+) serves as cofactor. The cofactor is thiamine diphosphate.

It carries out the reaction D-glyceraldehyde 3-phosphate + pyruvate + H(+) = 1-deoxy-D-xylulose 5-phosphate + CO2. Its pathway is metabolic intermediate biosynthesis; 1-deoxy-D-xylulose 5-phosphate biosynthesis; 1-deoxy-D-xylulose 5-phosphate from D-glyceraldehyde 3-phosphate and pyruvate: step 1/1. Its function is as follows. Catalyzes the acyloin condensation reaction between C atoms 2 and 3 of pyruvate and glyceraldehyde 3-phosphate to yield 1-deoxy-D-xylulose-5-phosphate (DXP). In Ruegeria pomeroyi (strain ATCC 700808 / DSM 15171 / DSS-3) (Silicibacter pomeroyi), this protein is 1-deoxy-D-xylulose-5-phosphate synthase.